The primary structure comprises 207 residues: Imidazole glycerol phosphate synthase subunit HisH (207 aa).

One can recognise a Glutamine amidotransferase type-1 domain in the interval 1-207 (MIGIIDYGMG…KRFGQLVEGN (207 aa)). Catalysis depends on Cys79, which acts as the Nucleophile. Residues His185 and Glu187 contribute to the active site.

In terms of assembly, heterodimer of HisH and HisF.

It is found in the cytoplasm. The catalysed reaction is 5-[(5-phospho-1-deoxy-D-ribulos-1-ylimino)methylamino]-1-(5-phospho-beta-D-ribosyl)imidazole-4-carboxamide + L-glutamine = D-erythro-1-(imidazol-4-yl)glycerol 3-phosphate + 5-amino-1-(5-phospho-beta-D-ribosyl)imidazole-4-carboxamide + L-glutamate + H(+). It carries out the reaction L-glutamine + H2O = L-glutamate + NH4(+). It functions in the pathway amino-acid biosynthesis; L-histidine biosynthesis; L-histidine from 5-phospho-alpha-D-ribose 1-diphosphate: step 5/9. IGPS catalyzes the conversion of PRFAR and glutamine to IGP, AICAR and glutamate. The HisH subunit catalyzes the hydrolysis of glutamine to glutamate and ammonia as part of the synthesis of IGP and AICAR. The resulting ammonia molecule is channeled to the active site of HisF. The polypeptide is Imidazole glycerol phosphate synthase subunit HisH (Shouchella clausii (strain KSM-K16) (Alkalihalobacillus clausii)).